The sequence spans 656 residues: Pyoverdine export ATP-binding/permease protein PvdT (656 aa).

The ABC transporter domain maps to isoleucine 6–valine 245. Glycine 43–serine 50 serves as a coordination point for ATP. The next 4 membrane-spanning stretches (helical) occupy residues alanine 284–glycine 304, isoleucine 538–valine 558, leucine 589–leucine 609, and leucine 619–methionine 639.

It belongs to the ABC transporter superfamily. Macrolide exporter (TC 3.A.1.122) family. As to quaternary structure, part of the tripartite efflux system PvdRT-OpmQ, which is composed of an inner membrane component with both ATPase and permease domains, PvdT, a periplasmic membrane fusion protein, PvdR, and an outer membrane component, OpmQ.

The protein resides in the cell inner membrane. Functionally, part of the tripartite efflux system PvdRT-OpmQ required for the secretion into the extracellular milieu of the siderophore pyoverdine (PVD), which is involved in iron acquisition. This subunit binds PVD and drives its secretion by hydrolyzing ATP. The system is responsible for export of newly synthesized PVD after the final steps of biosynthesis have taken place in the periplasm. It is also responsible for recycling of PVD after internalization of ferri-PVD into the periplasm by the outer-membrane receptor FpvA and release of iron from PVD, thus making PVD available for new cycles of iron uptake. This is Pyoverdine export ATP-binding/permease protein PvdT from Pseudomonas syringae pv. tomato (strain ATCC BAA-871 / DC3000).